The following is a 366-amino-acid chain: HTH-type transcriptional regulator MSMEG_6044/MSMEI_5883 (366 aa).

Residues 11–66 enclose the HTH lacI-type domain; sequence ATLASLAAELKVSRTTISNAYNRPDQLSADLRERIFDAAKRLGYPGPDPVARSLRT. The segment at residues 13-32 is a DNA-binding region (H-T-H motif); the sequence is LASLAAELKVSRTTISNAYN.

Its function is as follows. Transcriptional regulator that negatively regulates transcription of the mce4 operon, which is involved in cholesterol transport and utilization. Acts by binding to the promoter region of the mce4 operon. The polypeptide is HTH-type transcriptional regulator MSMEG_6044/MSMEI_5883 (Mycolicibacterium smegmatis (strain ATCC 700084 / mc(2)155) (Mycobacterium smegmatis)).